The primary structure comprises 486 residues: UDP-N-acetylmuramate--L-alanine ligase (486 aa).

An ATP-binding site is contributed by 126–132; that stretch reads GTHGKTS.

Belongs to the MurCDEF family.

It is found in the cytoplasm. It catalyses the reaction UDP-N-acetyl-alpha-D-muramate + L-alanine + ATP = UDP-N-acetyl-alpha-D-muramoyl-L-alanine + ADP + phosphate + H(+). It participates in cell wall biogenesis; peptidoglycan biosynthesis. Cell wall formation. This chain is UDP-N-acetylmuramate--L-alanine ligase, found in Corynebacterium glutamicum (strain ATCC 13032 / DSM 20300 / JCM 1318 / BCRC 11384 / CCUG 27702 / LMG 3730 / NBRC 12168 / NCIMB 10025 / NRRL B-2784 / 534).